Consider the following 242-residue polypeptide: Probable 2-phosphosulfolactate phosphatase (242 aa).

The protein belongs to the ComB family. Mg(2+) is required as a cofactor.

The catalysed reaction is (2R)-O-phospho-3-sulfolactate + H2O = (2R)-3-sulfolactate + phosphate. This is Probable 2-phosphosulfolactate phosphatase from Parasynechococcus marenigrum (strain WH8102).